Reading from the N-terminus, the 663-residue chain is UvrABC system protein B (663 aa).

One can recognise a Helicase ATP-binding domain in the interval 31 to 271 (DNIEGGEKAQ…EASIAKIQAE (241 aa)). 44–51 (GATGTGKT) lines the ATP pocket. The short motif at 97–120 (YYDYYQPEAYVPSSDTYIEKDSSV) is the Beta-hairpin element. The region spanning 435–601 (QMDDLLGEIN…TIKKEIRDLI (167 aa)) is the Helicase C-terminal domain. In terms of domain architecture, UVR spans 627–662 (QEAIKKLQKQMHEAAELLDFELAAQIRDMVLELKSM).

The protein belongs to the UvrB family. Forms a heterotetramer with UvrA during the search for lesions. Interacts with UvrC in an incision complex.

The protein localises to the cytoplasm. Its function is as follows. The UvrABC repair system catalyzes the recognition and processing of DNA lesions. A damage recognition complex composed of 2 UvrA and 2 UvrB subunits scans DNA for abnormalities. Upon binding of the UvrA(2)B(2) complex to a putative damaged site, the DNA wraps around one UvrB monomer. DNA wrap is dependent on ATP binding by UvrB and probably causes local melting of the DNA helix, facilitating insertion of UvrB beta-hairpin between the DNA strands. Then UvrB probes one DNA strand for the presence of a lesion. If a lesion is found the UvrA subunits dissociate and the UvrB-DNA preincision complex is formed. This complex is subsequently bound by UvrC and the second UvrB is released. If no lesion is found, the DNA wraps around the other UvrB subunit that will check the other stand for damage. In Streptococcus uberis (strain ATCC BAA-854 / 0140J), this protein is UvrABC system protein B.